Consider the following 517-residue polypeptide: MKKFKINYLLIGIVTLLLAAALWPSIPWFGKAENRIAAIQSRGELRVSTLDSPLTYNNVNGKIIGLDYELAQQFADYLGVKLKITVRQNISQLFDDLDNDDADLLAAGLVYNSERSKNYQPGPTYYSVSQQVVYRVGGVRPRTMATLNDQQLTVAPGHVVIDDLRALKEKKYPDLSWKVDEKLGTTALLEQVKDKKLAYTIADSVAISFFQRVHPEIAVALDVTDEQPVTWFSPLDDDQTLSAAILDFFNSMNEEGTLARLEEKYLGHGGDFDYVDTRSFLRAVDSVLPDLQPLFEKYAEEIDWRLLAAISYQESHWDAQATSPTGVRGLMMLTKNTAQSLGLTDRTDAEQSISGGARYLQDMMAKVPDTVPEEERIWFALAAYNMGYAHMLDARALTAKTKGNPDSWSDVKQRLPLLSQKPLYNKLTYGYARGHEAYAYVENIRKYQISLVGYLMEKEKEVTKAKQIAQSYPVVSPHELNHPATTSILPFVAFSADGAFERNHLIAPNTLVQAPRR.

An N-terminal signal peptide occupies residues 1–32; that stretch reads MKKFKINYLLIGIVTLLLAAALWPSIPWFGKA. Residues 33 to 269 form a non-LT domain region; it reads ENRIAAIQSR…RLEEKYLGHG (237 aa). The LT domain stretch occupies residues 270 to 517; the sequence is GDFDYVDTRS…PNTLVQAPRR (248 aa). Glutamate 314 is an active-site residue.

It in the N-terminal section; belongs to the bacterial solute-binding protein 3 family. In the C-terminal section; belongs to the transglycosylase Slt family.

The protein resides in the cell outer membrane. The catalysed reaction is Exolytic cleavage of the (1-&gt;4)-beta-glycosidic linkage between N-acetylmuramic acid (MurNAc) and N-acetylglucosamine (GlcNAc) residues in peptidoglycan, from either the reducing or the non-reducing ends of the peptidoglycan chains, with concomitant formation of a 1,6-anhydrobond in the MurNAc residue.. Functionally, murein-degrading enzyme that degrades murein glycan strands and insoluble, high-molecular weight murein sacculi, with the concomitant formation of a 1,6-anhydromuramoyl product. Lytic transglycosylases (LTs) play an integral role in the metabolism of the peptidoglycan (PG) sacculus. Their lytic action creates space within the PG sacculus to allow for its expansion as well as for the insertion of various structures such as secretion systems and flagella. The sequence is that of Membrane-bound lytic murein transglycosylase F from Enterobacter sp. (strain 638).